The primary structure comprises 540 residues: Glucose-6-phosphate isomerase (540 aa).

E346 (proton donor) is an active-site residue. Active-site residues include H377 and K505.

The protein belongs to the GPI family.

It is found in the cytoplasm. The enzyme catalyses alpha-D-glucose 6-phosphate = beta-D-fructose 6-phosphate. It participates in carbohydrate biosynthesis; gluconeogenesis. It functions in the pathway carbohydrate degradation; glycolysis; D-glyceraldehyde 3-phosphate and glycerone phosphate from D-glucose: step 2/4. Catalyzes the reversible isomerization of glucose-6-phosphate to fructose-6-phosphate. The sequence is that of Glucose-6-phosphate isomerase from Francisella tularensis subsp. mediasiatica (strain FSC147).